The sequence spans 226 residues: Small ribosomal subunit protein uS3 (226 aa).

Residues 36–104 (IRKYLENRLS…KIQINIFEIK (69 aa)) form the KH type-2 domain.

This sequence belongs to the universal ribosomal protein uS3 family. In terms of assembly, part of the 30S ribosomal subunit. Forms a tight complex with proteins S10 and S14.

Binds the lower part of the 30S subunit head. Binds mRNA in the 70S ribosome, positioning it for translation. The polypeptide is Small ribosomal subunit protein uS3 (Karelsulcia muelleri (strain GWSS) (Sulcia muelleri)).